Here is a 273-residue protein sequence, read N- to C-terminus: Undecaprenyl-diphosphatase (273 aa).

7 helical membrane passes run 4-24 (FLLL…FLPI), 43-63 (KGKV…CWEY), 83-103 (FVLN…LFIK), 109-129 (LFHP…ILWA), 184-204 (ATEF…FYDL), 218-238 (VFAI…RGLL), and 248-268 (VFAW…YSGM).

This sequence belongs to the UppP family.

It localises to the cell inner membrane. The catalysed reaction is di-trans,octa-cis-undecaprenyl diphosphate + H2O = di-trans,octa-cis-undecaprenyl phosphate + phosphate + H(+). In terms of biological role, catalyzes the dephosphorylation of undecaprenyl diphosphate (UPP). Confers resistance to bacitracin. This Nitrosospira multiformis (strain ATCC 25196 / NCIMB 11849 / C 71) protein is Undecaprenyl-diphosphatase.